The chain runs to 263 residues: tRNA pseudouridine synthase A (263 aa).

Asp51 functions as the Nucleophile in the catalytic mechanism. Residue Tyr109 participates in substrate binding.

The protein belongs to the tRNA pseudouridine synthase TruA family. As to quaternary structure, homodimer.

The catalysed reaction is uridine(38/39/40) in tRNA = pseudouridine(38/39/40) in tRNA. Functionally, formation of pseudouridine at positions 38, 39 and 40 in the anticodon stem and loop of transfer RNAs. The sequence is that of tRNA pseudouridine synthase A from Pseudoalteromonas atlantica (strain T6c / ATCC BAA-1087).